A 339-amino-acid polypeptide reads, in one-letter code: MEEEIKSLINVGFLTIISVSYCYCLPPRIKSGVLRLLSIFPVCVLLVVLPLFFSFSIFTSTTAFFLSAIANSRLILFSFDQGPLFPLPSNLFRFTCFTCFPIQRQQNPKSQDHLSTYVFPVKIAIFVVLLYVHNDIQNLPRTFLLCLHPLYVYLLLEILLTLLRILMTIILGCDLEPHFHEPYLATSLQDFWGRRWNLIVSASLRAIVYTPVRRVCQRVMSSDYAMLIGVFATFVTSGVAHEVVFFYITRAMPTGEVALFFLLHGVCTVAEVAAKRTAFVRRWPVRPVVSWMFTIAFVNVTAGWLFFPQLIRNNLGERCSNEISLLIDFFRSKLFYFPQ.

Transmembrane regions (helical) follow at residues 7–27 (SLIN…CLPP), 39–59 (IFPV…SIFT), 113–133 (HLST…LYVH), 143–163 (FLLC…LTLL), 226–246 (MLIG…VVFF), 254–274 (TGEV…EVAA), and 287–307 (PVVS…WLFF).

It belongs to the wax synthase family.

The protein localises to the membrane. The catalysed reaction is a long chain fatty alcohol + a fatty acyl-CoA = a wax ester + CoA. Its function is as follows. Catalyzes the final step in the synthesis of long-chain linear esters (waxes). This is Probable long-chain-alcohol O-fatty-acyltransferase 7 (AT7) from Arabidopsis thaliana (Mouse-ear cress).